The sequence spans 97 residues: MKIIREAVAGTLESSDVMVRIAPLNPPEIDLQIHSSVDKQFGDAIRYSVLALLEQYRVTGVQLIIDDKGALDCVLQARLETALLRASDEKILPWRAH.

Ser14 carries the post-translational modification O-(phosphoribosyl dephospho-coenzyme A)serine.

It belongs to the CitD family. Oligomer with a subunit composition of (alpha,beta,gamma)6.

It is found in the cytoplasm. Functionally, covalent carrier of the coenzyme of citrate lyase. The polypeptide is Citrate lyase acyl carrier protein (Yersinia enterocolitica serotype O:8 / biotype 1B (strain NCTC 13174 / 8081)).